Consider the following 1049-residue polypeptide: Exotoxin PaxA (1049 aa).

The next 4 membrane-spanning stretches (helical) occupy residues 246-266, 311-331, 375-395, and 397-417; these read GLGL…FTLA, GPAA…LSFL, ITTI…ASAG, and LVGA…SGIL. Hemolysin-type calcium-binding repeat units follow at residues 744–761, 762–779, 780–797, 798–815, 826–843, and 844–861; these read KGSK…DDLL, NGND…NDEL, RGDN…NDKL, FGGN…DDEL, RGGK…SDFL, and DGGE…NDFY.

The protein belongs to the RTX prokaryotic toxin (TC 1.C.11) family.

It localises to the secreted. The protein localises to the host cell membrane. In terms of biological role, paxA is associated with abortion cases in swine and septicemia in young piglets. Shows cohemolytic activity with the sphingomyelinase of S.aureus but is devoid of direct hemolytic activity. The protein is Exotoxin PaxA (paxA) of Pasteurella aerogenes.